We begin with the raw amino-acid sequence, 297 residues long: N-acetylneuraminate lyase (297 aa).

Aceneuramate-binding residues include serine 47 and threonine 48. Tyrosine 137 (proton donor) is an active-site residue. Residue lysine 165 is the Schiff-base intermediate with substrate of the active site. 5 residues coordinate aceneuramate: threonine 167, glycine 189, aspartate 191, glutamate 192, and serine 208.

The protein belongs to the DapA family. NanA subfamily. As to quaternary structure, homotetramer.

Its subcellular location is the cytoplasm. The catalysed reaction is aceneuramate = aldehydo-N-acetyl-D-mannosamine + pyruvate. It functions in the pathway amino-sugar metabolism; N-acetylneuraminate degradation; D-fructose 6-phosphate from N-acetylneuraminate: step 1/5. Its function is as follows. Catalyzes the reversible aldol cleavage of N-acetylneuraminic acid (sialic acid; Neu5Ac) to form pyruvate and N-acetylmannosamine (ManNAc) via a Schiff base intermediate. The chain is N-acetylneuraminate lyase from Salmonella agona (strain SL483).